A 291-amino-acid polypeptide reads, in one-letter code: ATP synthase gamma chain (291 aa).

The protein belongs to the ATPase gamma chain family. As to quaternary structure, F-type ATPases have 2 components, CF(1) - the catalytic core - and CF(0) - the membrane proton channel. CF(1) has five subunits: alpha(3), beta(3), gamma(1), delta(1), epsilon(1). CF(0) has three main subunits: a, b and c.

It localises to the cell inner membrane. Its function is as follows. Produces ATP from ADP in the presence of a proton gradient across the membrane. The gamma chain is believed to be important in regulating ATPase activity and the flow of protons through the CF(0) complex. This Burkholderia thailandensis (strain ATCC 700388 / DSM 13276 / CCUG 48851 / CIP 106301 / E264) protein is ATP synthase gamma chain.